Here is a 505-residue protein sequence, read N- to C-terminus: Maturase K (505 aa).

The protein belongs to the intron maturase 2 family. MatK subfamily.

The protein resides in the plastid. It localises to the chloroplast. In terms of biological role, usually encoded in the trnK tRNA gene intron. Probably assists in splicing its own and other chloroplast group II introns. The polypeptide is Maturase K (Calycanthus floridus (Eastern sweetshrub)).